Reading from the N-terminus, the 463-residue chain is 3-isopropylmalate dehydratase large subunit (463 aa).

[4Fe-4S] cluster is bound by residues Cys347, Cys407, and Cys410.

Belongs to the aconitase/IPM isomerase family. LeuC type 1 subfamily. In terms of assembly, heterodimer of LeuC and LeuD. Requires [4Fe-4S] cluster as cofactor.

The catalysed reaction is (2R,3S)-3-isopropylmalate = (2S)-2-isopropylmalate. It functions in the pathway amino-acid biosynthesis; L-leucine biosynthesis; L-leucine from 3-methyl-2-oxobutanoate: step 2/4. Functionally, catalyzes the isomerization between 2-isopropylmalate and 3-isopropylmalate, via the formation of 2-isopropylmaleate. This is 3-isopropylmalate dehydratase large subunit from Buchnera aphidicola subsp. Cinara cedri (strain Cc).